A 512-amino-acid polypeptide reads, in one-letter code: DNA damage-binding protein CMR1 (512 aa).

The disordered stretch occupies residues 32–96 (SQIKREAGVE…IPNVNDNQLL (65 aa)). The span at 34 to 46 (IKREAGVEDEHLD) shows a compositional bias: basic and acidic residues. Basic residues predominate over residues 47 to 60 (RKRKKKAGSAKKAV). WD repeat units lie at residues 189 to 230 (LTAE…PEDE), 241 to 281 (LFTK…SEEI), 289 to 329 (DDPL…TEIN), 333 to 373 (LSDK…NKPE), 390 to 429 (DSRL…PEDL), 442 to 481 (GRWT…LAHL), and 482 to 512 (PTAT…FLFT).

Belongs to the WD repeat DDB2/WDR76 family.

Its function is as follows. DNA-binding protein that binds to both single- and double-stranded DNA. Binds preferentially to UV-damaged DNA. May be involved in DNA-metabolic processes. The sequence is that of DNA damage-binding protein CMR1 from Kluyveromyces lactis (strain ATCC 8585 / CBS 2359 / DSM 70799 / NBRC 1267 / NRRL Y-1140 / WM37) (Yeast).